The chain runs to 666 residues: DNA ligase (666 aa).

Residues 31 to 35 (DYDFD), 80 to 81 (SL), and Glu111 contribute to the NAD(+) site. Lys113 functions as the N6-AMP-lysine intermediate in the catalytic mechanism. Arg134, Glu170, Lys285, and Lys309 together coordinate NAD(+). Zn(2+)-binding residues include Cys403, Cys406, Cys421, and Cys427. The BRCT domain occupies 587–666 (VVSNKLLGKI…ESDFSALLTS (80 aa)).

This sequence belongs to the NAD-dependent DNA ligase family. LigA subfamily. Mg(2+) serves as cofactor. The cofactor is Mn(2+).

It catalyses the reaction NAD(+) + (deoxyribonucleotide)n-3'-hydroxyl + 5'-phospho-(deoxyribonucleotide)m = (deoxyribonucleotide)n+m + AMP + beta-nicotinamide D-nucleotide.. In terms of biological role, DNA ligase that catalyzes the formation of phosphodiester linkages between 5'-phosphoryl and 3'-hydroxyl groups in double-stranded DNA using NAD as a coenzyme and as the energy source for the reaction. It is essential for DNA replication and repair of damaged DNA. The sequence is that of DNA ligase from Flavobacterium psychrophilum (strain ATCC 49511 / DSM 21280 / CIP 103535 / JIP02/86).